The primary structure comprises 291 residues: Methionine aminopeptidase (291 aa).

Residue His118 participates in substrate binding. A divalent metal cation is bound by residues Asp135, Asp146, and His209. His216 provides a ligand contact to substrate. A divalent metal cation is bound by residues Glu241 and Glu273.

The protein belongs to the peptidase M24A family. Methionine aminopeptidase type 1 subfamily. Monomer. It depends on Co(2+) as a cofactor. The cofactor is Zn(2+). Requires Mn(2+) as cofactor. Fe(2+) is required as a cofactor.

It carries out the reaction Release of N-terminal amino acids, preferentially methionine, from peptides and arylamides.. Functionally, removes the N-terminal methionine from nascent proteins. The N-terminal methionine is often cleaved when the second residue in the primary sequence is small and uncharged (Met-Ala-, Cys, Gly, Pro, Ser, Thr, or Val). Requires deformylation of the N(alpha)-formylated initiator methionine before it can be hydrolyzed. The chain is Methionine aminopeptidase from Chlamydia muridarum (strain MoPn / Nigg).